Consider the following 208-residue polypeptide: GATA transcription factor 29 (208 aa).

The GATA-type; atypical zinc finger occupies Gly-155–Asp-208.

This sequence belongs to the type IV zinc-finger family. Class B subfamily.

Its subcellular location is the nucleus. Functionally, transcriptional regulator that specifically binds 5'-GATA-3' or 5'-GAT-3' motifs within gene promoters. This is GATA transcription factor 29 (GATA29) from Arabidopsis thaliana (Mouse-ear cress).